We begin with the raw amino-acid sequence, 255 residues long: Large ribosomal subunit protein uL4 (255 aa).

The protein belongs to the universal ribosomal protein uL4 family. As to quaternary structure, part of the 50S ribosomal subunit.

Its function is as follows. One of the primary rRNA binding proteins, this protein initially binds near the 5'-end of the 23S rRNA. It is important during the early stages of 50S assembly. It makes multiple contacts with different domains of the 23S rRNA in the assembled 50S subunit and ribosome. In terms of biological role, forms part of the polypeptide exit tunnel. This chain is Large ribosomal subunit protein uL4, found in Thermococcus kodakarensis (strain ATCC BAA-918 / JCM 12380 / KOD1) (Pyrococcus kodakaraensis (strain KOD1)).